Consider the following 352-residue polypeptide: Protein RecA (352 aa).

Residue 74-81 (GPESSGKT) participates in ATP binding.

The protein belongs to the RecA family.

It is found in the cytoplasm. Can catalyze the hydrolysis of ATP in the presence of single-stranded DNA, the ATP-dependent uptake of single-stranded DNA by duplex DNA, and the ATP-dependent hybridization of homologous single-stranded DNAs. It interacts with LexA causing its activation and leading to its autocatalytic cleavage. This Ralstonia nicotianae (strain ATCC BAA-1114 / GMI1000) (Ralstonia solanacearum) protein is Protein RecA.